The sequence spans 270 residues: Acyl-[acyl-carrier-protein]--UDP-N-acetylglucosamine O-acyltransferase (270 aa).

It belongs to the transferase hexapeptide repeat family. LpxA subfamily. As to quaternary structure, homotrimer.

It localises to the cytoplasm. The catalysed reaction is a (3R)-hydroxyacyl-[ACP] + UDP-N-acetyl-alpha-D-glucosamine = a UDP-3-O-[(3R)-3-hydroxyacyl]-N-acetyl-alpha-D-glucosamine + holo-[ACP]. It functions in the pathway glycolipid biosynthesis; lipid IV(A) biosynthesis; lipid IV(A) from (3R)-3-hydroxytetradecanoyl-[acyl-carrier-protein] and UDP-N-acetyl-alpha-D-glucosamine: step 1/6. Involved in the biosynthesis of lipid A, a phosphorylated glycolipid that anchors the lipopolysaccharide to the outer membrane of the cell. In Helicobacter acinonychis (strain Sheeba), this protein is Acyl-[acyl-carrier-protein]--UDP-N-acetylglucosamine O-acyltransferase.